Reading from the N-terminus, the 198-residue chain is Putative transposase InsO for insertion sequence element IS911B (198 aa).

Residues 105 to 198 enclose the Integrase catalytic domain; that stretch reads AVTEPNQVWC…YCGDTGSGRV (94 aa).

In terms of biological role, involved in the transposition of the insertion sequence IS911B. This chain is Putative transposase InsO for insertion sequence element IS911B (insO2), found in Escherichia coli (strain K12).